An 86-amino-acid polypeptide reads, in one-letter code: Cell division topological specificity factor (86 aa).

This sequence belongs to the MinE family.

Its function is as follows. Prevents the cell division inhibition by proteins MinC and MinD at internal division sites while permitting inhibition at polar sites. This ensures cell division at the proper site by restricting the formation of a division septum at the midpoint of the long axis of the cell. This Rhizobium etli (strain ATCC 51251 / DSM 11541 / JCM 21823 / NBRC 15573 / CFN 42) protein is Cell division topological specificity factor.